The sequence spans 351 residues: Phosphoribosylformylglycinamidine cyclo-ligase (351 aa).

It belongs to the AIR synthase family.

Its subcellular location is the cytoplasm. It carries out the reaction 2-formamido-N(1)-(5-O-phospho-beta-D-ribosyl)acetamidine + ATP = 5-amino-1-(5-phospho-beta-D-ribosyl)imidazole + ADP + phosphate + H(+). It participates in purine metabolism; IMP biosynthesis via de novo pathway; 5-amino-1-(5-phospho-D-ribosyl)imidazole from N(2)-formyl-N(1)-(5-phospho-D-ribosyl)glycinamide: step 2/2. The sequence is that of Phosphoribosylformylglycinamidine cyclo-ligase from Xylella fastidiosa (strain Temecula1 / ATCC 700964).